The sequence spans 297 residues: Protein COFACTOR ASSEMBLY OF COMPLEX C SUBUNIT B CCB4, chloroplastic (297 aa).

The N-terminal 33 residues, 1-33 (MEARIILLRIQIPWSANRQFSHPPLDFPRFIRA), are a transit peptide targeting the chloroplast. The Stromal segment spans residues 34–70 (SSSSTSQKPKTYEGPKPRKNLVADFISKNDDLVRSLP). The chain crosses the membrane as a helical span at residues 71-91 (IYVGGASLLAVLFNRTVSGIA). The Lumenal portion of the chain corresponds to 92–103 (PVADASSSQSRA). Residues 104-124 (DLLALGLAVTNLLTGLVWLSI) form a helical membrane-spanning segment. Residues 125–297 (RPKSITPVNP…DSDEISRVTV (173 aa)) lie on the Stromal side of the membrane.

The protein localises to the plastid. Its subcellular location is the chloroplast thylakoid membrane. Functionally, required for the biogenesis and accumulation of native cytochrome b6 in the thylakoid membrane. Controls the conversion of apocytochrome b6 to holocytochrome b6. Required for covalent binding of the c-type heme to cytochrome b6. The polypeptide is Protein COFACTOR ASSEMBLY OF COMPLEX C SUBUNIT B CCB4, chloroplastic (Arabidopsis thaliana (Mouse-ear cress)).